A 132-amino-acid polypeptide reads, in one-letter code: Small ribosomal subunit protein uS11c (132 aa).

It belongs to the universal ribosomal protein uS11 family. Part of the 30S ribosomal subunit.

The protein localises to the plastid. The protein resides in the chloroplast. In Gnetum parvifolium (Small-leaved jointfir), this protein is Small ribosomal subunit protein uS11c.